The following is an 833-amino-acid chain: Translation initiation factor IF-2 (833 aa).

Residues 331-501 (TRAPVVTVMG…LLIAEMQDLK (171 aa)) enclose the tr-type G domain. Positions 340–347 (GHVDHGKT) are G1. 340–347 (GHVDHGKT) is a binding site for GTP. The tract at residues 365 to 369 (GITQH) is G2. Residues 387–390 (DTPG) are G3. GTP contacts are provided by residues 387–391 (DTPGH) and 441–444 (NKID). The interval 441–444 (NKID) is G4. The G5 stretch occupies residues 477–479 (SAL).

It belongs to the TRAFAC class translation factor GTPase superfamily. Classic translation factor GTPase family. IF-2 subfamily.

The protein localises to the cytoplasm. Its function is as follows. One of the essential components for the initiation of protein synthesis. Protects formylmethionyl-tRNA from spontaneous hydrolysis and promotes its binding to the 30S ribosomal subunits. Also involved in the hydrolysis of GTP during the formation of the 70S ribosomal complex. The protein is Translation initiation factor IF-2 of Rickettsia canadensis (strain McKiel).